The chain runs to 278 residues: MSRSSPEQLSRFLAEVHGRPKKGLSQNFLIDGNILRKILAVSCVQAGDWVLEIGPGFGALTEVLVNQGAHVVALEKDSMLEETLKQLPIHLEITDACKYPLSQLQDQGWQGKGRVVANLPYHITTPLLRKLFLEAPNQWKTVTVMIQDEVARRITAQPGGKEYGSLTIFLQFFVDVHYAFKVSPGCFLPKPQVASAVVHMTVKENFPLEEPLRTKFFSLTRAAFGQRRKLLANALKDLYPKERVFEALSQLHFSDKTRPETLSLDDYLKLFYLLSLPA.

S-adenosyl-L-methionine is bound by residues Asn-27, Leu-29, Gly-54, Glu-75, Asp-95, and Asn-118.

Belongs to the class I-like SAM-binding methyltransferase superfamily. rRNA adenine N(6)-methyltransferase family. RsmA subfamily.

The protein localises to the cytoplasm. It carries out the reaction adenosine(1518)/adenosine(1519) in 16S rRNA + 4 S-adenosyl-L-methionine = N(6)-dimethyladenosine(1518)/N(6)-dimethyladenosine(1519) in 16S rRNA + 4 S-adenosyl-L-homocysteine + 4 H(+). Functionally, specifically dimethylates two adjacent adenosines (A1518 and A1519) in the loop of a conserved hairpin near the 3'-end of 16S rRNA in the 30S particle. May play a critical role in biogenesis of 30S subunits. The polypeptide is Ribosomal RNA small subunit methyltransferase A (Chlamydia abortus (strain DSM 27085 / S26/3) (Chlamydophila abortus)).